The primary structure comprises 546 residues: Putative inactive G-type lectin S-receptor-like serine/threonine-protein kinase SRK (546 aa).

Residues 1–31 (MRGELPNKHHSYTFFVFLFFFLILFPDLSIS) form the signal peptide. The Extracellular segment spans residues 32–441 (VNTLSATESL…FGERRTIRGK (410 aa)). Positions 34 to 154 (TLSATESLTI…KINESDEFLW (121 aa)) constitute a Bulb-type lectin domain. 4 N-linked (GlcNAc...) asparagine glycosylation sites follow: Asn46, Asn120, Asn147, and Asn243. The region spanning 293–329 (PKDTCDLYGICGPYAYCDMSTSPTCNCIKGFQPLSPQ) is the EGF-like; atypical domain. 4 disulfide bridges follow: Cys297/Cys309, Cys303/Cys317, Cys378/Cys403, and Cys382/Cys388. One can recognise a PAN domain in the interval 348-428 (CGEDRFFRLM…DGQDLFVRLA (81 aa)). Asn387 carries an N-linked (GlcNAc...) asparagine glycan. The chain crosses the membrane as a helical span at residues 442 to 462 (IIGLIIGISLMLVLSFIIYCF). Topologically, residues 463-546 (WKKKQKRARA…IVYKGRLLDG (84 aa)) are cytoplasmic. In terms of domain architecture, Protein kinase spans 524-546 (FSDSNILGRGGFGIVYKGRLLDG). 530 to 538 (LGRGGFGIV) contacts ATP.

This sequence belongs to the protein kinase superfamily. Ser/Thr protein kinase family.

It is found in the cell membrane. Truncated and inactivated form of SRK, the female specificity determinant of self-incompatibility when active. Most A.thaliana cultivars contain such an inactive form and thus, are self-fertiles. The sequence is that of Putative inactive G-type lectin S-receptor-like serine/threonine-protein kinase SRK (PSEUDOSRKA) from Arabidopsis thaliana (Mouse-ear cress).